The sequence spans 38 residues: Potassium channel toxin alpha-KTx 2.21 (38 aa).

Cystine bridges form between cysteine 7/cysteine 29, cysteine 13/cysteine 34, and cysteine 17/cysteine 36.

As to expression, expressed by the venom gland.

Its subcellular location is the secreted. Inhibits human voltage-gated potassium (Kv) channels Kv1.2/KCNA2 and Kv1.3/KCNA3. Does not block human Kv1.1/KCNA1 at 100nM concentration. This is Potassium channel toxin alpha-KTx 2.21 from Centruroides bonito (Scorpion).